Here is a 423-residue protein sequence, read N- to C-terminus: GTPase HflX (423 aa).

A Hflx-type G domain is found at 202 to 366 (PAAAIVGYTN…LLETILRNQK (165 aa)). GTP contacts are provided by residues 208–215 (GYTNAGKS), 233–237 (FATLD), 255–258 (DTVG), 321–324 (NKID), and 344–346 (SAK). The Mg(2+) site is built by Ser215 and Thr235.

Belongs to the TRAFAC class OBG-HflX-like GTPase superfamily. HflX GTPase family. Monomer. Associates with the 50S ribosomal subunit. The cofactor is Mg(2+).

It is found in the cytoplasm. Its function is as follows. GTPase that associates with the 50S ribosomal subunit and may have a role during protein synthesis or ribosome biogenesis. This Lacrimispora saccharolytica (strain ATCC 35040 / DSM 2544 / NRCC 2533 / WM1) (Clostridium saccharolyticum) protein is GTPase HflX.